We begin with the raw amino-acid sequence, 297 residues long: MSEEAWARSAGGRAILAESPRPVPSRQRSNGVVRLRVARAGIAADGPTRIVDLAEGGPLRLRFPRQGAERMLEGVLVNTGGGVACGDVFEVSVMVEAGAACLLTTTAAEKIYRSDGANATILNRIEVGPAGRLDWLPQETILFDRARLVRRFEADLAPDASLLVAEIAVLGRAARGERLEQALFEDRWRIRRGGRLVYADSLRLDGAVSDLMARAATGGGARALATLLDLAPGAEARLDEARTLLDALPAGVEAGASAWNGHLAVRMLAPAIAPLREAAARFLAVWRDRPMPRVWQS.

The protein belongs to the UreD family. In terms of assembly, ureD, UreF and UreG form a complex that acts as a GTP-hydrolysis-dependent molecular chaperone, activating the urease apoprotein by helping to assemble the nickel containing metallocenter of UreC. The UreE protein probably delivers the nickel.

The protein resides in the cytoplasm. Its function is as follows. Required for maturation of urease via the functional incorporation of the urease nickel metallocenter. In Methylorubrum populi (strain ATCC BAA-705 / NCIMB 13946 / BJ001) (Methylobacterium populi), this protein is Urease accessory protein UreD 2.